Reading from the N-terminus, the 312-residue chain is Very-long-chain 3-oxoacyl-CoA reductase (312 aa).

Helical transmembrane passes span 33-53 (VWGIGAGRAALGPGLGAWAVV), 181-201 (GVILNISSAAGMYPTPLLTLY), and 274-294 (HAFMGWVFSILPTSTVMNLLM). 48 to 77 (GAWAVVTGATDGIGKAYAKELAKRGMKVAL) lines the NADP(+) pocket. Residue serine 188 coordinates substrate. The Proton acceptor role is filled by tyrosine 201.

The protein belongs to the short-chain dehydrogenases/reductases (SDR) family. 17-beta-HSD 3 subfamily. In terms of tissue distribution, brain.

The protein localises to the endoplasmic reticulum membrane. It catalyses the reaction a very-long-chain (3R)-3-hydroxyacyl-CoA + NADP(+) = a very-long-chain 3-oxoacyl-CoA + NADPH + H(+). It carries out the reaction 17beta-estradiol + NAD(+) = estrone + NADH + H(+). The enzyme catalyses 17beta-estradiol + NADP(+) = estrone + NADPH + H(+). The catalysed reaction is 3-oxooctadecanoyl-CoA + NADPH + H(+) = (3R)-hydroxyoctadecanoyl-CoA + NADP(+). It catalyses the reaction (7Z,10Z,13Z,16Z)-3-oxodocosatetraenoyl-CoA + NADPH + H(+) = (3R)-hydroxy-(7Z,10Z,13Z,16Z)-docosatetraenoyl-CoA + NADP(+). It carries out the reaction 3-oxo-(7Z,10Z,13Z,16Z,19Z)-docosapentaenoyl-CoA + NADPH + H(+) = (3R)-hydroxy-(7Z,10Z,13Z,16Z,19Z)-docosapentaenoyl-CoA + NADP(+). The enzyme catalyses (8Z,11Z,14Z)-3-oxoeicosatrienoyl-CoA + NADPH + H(+) = (3R)-hydroxy-(8Z,11Z,14Z)-eicosatrienoyl-CoA + NADP(+). The protein operates within lipid metabolism; fatty acid biosynthesis. Its pathway is steroid biosynthesis; estrogen biosynthesis. Catalyzes the second of the four reactions of the long-chain fatty acids elongation cycle. This endoplasmic reticulum-bound enzymatic process, allows the addition of two carbons to the chain of long- and very long-chain fatty acids/VLCFAs per cycle. This enzyme has a 3-ketoacyl-CoA reductase activity, reducing 3-ketoacyl-CoA to 3-hydroxyacyl-CoA, within each cycle of fatty acid elongation. Thereby, it may participate in the production of VLCFAs of different chain lengths that are involved in multiple biological processes as precursors of membrane lipids and lipid mediators. May also catalyze the transformation of estrone (E1) into estradiol (E2) and play a role in estrogen formation. The protein is Very-long-chain 3-oxoacyl-CoA reductase (HSD17B12) of Anas platyrhynchos (Mallard).